The following is a 681-amino-acid chain: Sterile alpha motif domain-containing protein 11 (681 aa).

4 disordered regions span residues 41-77, 212-234, 251-307, and 407-498; these read RNLKKERTPSFSASDGDSDGSGPTCGRRPGLKQEDGP, YHLGLPSHGEDPPWHDPPHHLPS, GPSG…APHV, and LLAL…GAEG. Lys72 is covalently cross-linked (Glycyl lysine isopeptide (Lys-Gly) (interchain with G-Cter in SUMO2)). A compositionally biased stretch (basic and acidic residues) spans 219 to 234; sequence HGEDPPWHDPPHHLPS. Residues 412–423 show a composition bias toward pro residues; that stretch reads PQGPPGSGPPTP. Position 485 is a phosphothreonine (Thr485). The SAM domain maps to 543-608; that stretch reads WTVDDVCSFV…AQVARRLGRV (66 aa). The segment at 625–681 is disordered; the sequence is LRAPERELGTGEQPLSPTTATSPYGGGHALAGQTSPKQENGTLALLPGAPDPSQPLC. 2 stretches are compositionally biased toward polar residues: residues 637–646 and 656–665; these read QPLSPTTATS and GQTSPKQENG. Ser640 bears the Phosphoserine mark.

In terms of assembly, self-associates. Component of a Polycomb group (PcG) multiprotein PRC1-like complex. Interacts with SAMD7 and PHC2. In terms of tissue distribution, expressed in the outer and inner nuclear layers, ganglion cell layer and rod photoreceptors of the retina (at protein level). Widely expressed, showing the highest expression in kidney, prostate and retina.

The protein resides in the nucleus. Its function is as follows. Component of a Polycomb group (PcG) multiprotein PRC1-like complex, essential for establishing rod photoreceptor cell identity and function by silencing nonrod gene expression in developing rod photoreceptor cells. The protein is Sterile alpha motif domain-containing protein 11 (SAMD11) of Homo sapiens (Human).